The chain runs to 692 residues: MSCFSHVMNPITGENSWQEREDDYDYHQEVANAGFGDMLHDWERNQKYFAALRKTIKGMRAAGREVHVLDIGTGTGILSMMALKAGADSVTACEAFLPMANCAAKIFTDNGVGDKVQLIRKRSTDIKIGADLDMPQRANLLVAELLDTELIGEGAISIYNHAHAELLTDDALCIPARARCYAQVAQSPLASQWNSLKILPNLDGEALLRPPEQLKSCKGEAALHDVQLSQLPAGTFRLLTEPIEIFQLDFQRKEKREKQREKLVQLQASQPGAAELVFYWWDIQLDDQGEILLSCAPYWAHPELKELSASKEERVPVANVVPWRDHWMQAIYYVPKPPQLATVGQDFYLSCHHDEYSLWFDAMLEAPAKTVRRHTCSCDLHMTYSRSRIGQLNQAIRNKRYLRYLEATIVPKQSNVLVLGNGCMLGLASAALGAASVQLHEPHRFSRRLIDSIVQHNELKNVKYVENVEQLEDTELIALSHVFAEPYFLNAILPWDNFYFGTLLMKLKDKLPEKVEISPCEARIFALPVEFLDLHKIRAPVGSCEGFDLRLFDEMVERSAEQAVSLVEAQPLWEYPSRALAEPQQLLSVDFANFNVDHHLQGSIELTQSGVCNGIALWVDWHLDKTNNPKSIVSTGPSEAVVPGEFVKWDMFVRQGVHFPRKPTDLSGRVAWSTDFKPLLGQLKFGFSQEKR.

SAM-dependent MTase PRMT-type domains are found at residues 14–359 (ENSW…YSLW) and 368–692 (AKTV…QEKR).

Belongs to the class I-like SAM-binding methyltransferase superfamily. Protein arginine N-methyltransferase family. PRMT7 subfamily.

Essential arginine methyltransferase that can both catalyze the formation of omega-N monomethylarginine (MMA) and symmetrical dimethylarginine (sDMA). Specifically mediates the symmetrical dimethylation of arginine residues in the small nuclear ribonucleoproteins SmD1 and SmD3. The protein is Protein arginine N-methyltransferase 7 (Art7) of Drosophila pseudoobscura pseudoobscura (Fruit fly).